Consider the following 74-residue polypeptide: Conotoxin ca17a (74 aa).

An N-terminal signal peptide occupies residues methionine 1–alanine 20. A propeptide spanning residues glutamine 21–arginine 40 is cleaved from the precursor. Proline 51 is modified (4-hydroxyproline).

Post-translationally, contains disulfide bonds. Expressed by the venom gland.

The protein localises to the secreted. This Conus caracteristicus (Characteristic cone) protein is Conotoxin ca17a.